The following is a 275-amino-acid chain: Large ribosomal subunit protein uL2 (275 aa).

Residues 223 to 275 (VAMNPIDHPHGGGEGRTGEAREPVSPWGTPSKGYKTRRNKRTNNMIVQRRKRK) form a disordered region. Residues 229–244 (DHPHGGGEGRTGEARE) are compositionally biased toward basic and acidic residues.

The protein belongs to the universal ribosomal protein uL2 family. Part of the 50S ribosomal subunit. Forms a bridge to the 30S subunit in the 70S ribosome.

One of the primary rRNA binding proteins. Required for association of the 30S and 50S subunits to form the 70S ribosome, for tRNA binding and peptide bond formation. It has been suggested to have peptidyltransferase activity; this is somewhat controversial. Makes several contacts with the 16S rRNA in the 70S ribosome. In Bordetella avium (strain 197N), this protein is Large ribosomal subunit protein uL2.